A 228-amino-acid chain; its full sequence is Cytidylate kinase (228 aa).

12–20 (GPASAGKST) provides a ligand contact to ATP.

It belongs to the cytidylate kinase family. Type 1 subfamily.

It is found in the cytoplasm. It carries out the reaction CMP + ATP = CDP + ADP. It catalyses the reaction dCMP + ATP = dCDP + ADP. The sequence is that of Cytidylate kinase from Lactiplantibacillus plantarum (strain ATCC BAA-793 / NCIMB 8826 / WCFS1) (Lactobacillus plantarum).